Here is a 79-residue protein sequence, read N- to C-terminus: Scutelatoxin (79 aa).

A signal peptide spans Met-1 to Thr-21. Intrachain disulfides connect Cys-24/Cys-41, Cys-34/Cys-59, Cys-63/Cys-71, and Cys-72/Cys-77.

It belongs to the three-finger toxin family. Short-chain subfamily. Expressed by the venom gland.

Its subcellular location is the secreted. The sequence is that of Scutelatoxin from Oxyuranus scutellatus scutellatus (Australian taipan).